The sequence spans 234 residues: Urease subunit alpha (234 aa).

The interval 1 to 102 is urease gamma; sequence MKLTPKELDK…LVTIHTPVEA (102 aa). The urease beta stretch occupies residues 103-234; the sequence is GSDKLAPGEV…GTINCGCDNK (132 aa).

In the N-terminal section; belongs to the urease gamma subunit family. This sequence in the C-terminal section; belongs to the urease beta subunit family. Heterohexamer of 3 UreA (alpha) and 3 UreB (beta) subunits.

Its subcellular location is the cytoplasm. The catalysed reaction is urea + 2 H2O + H(+) = hydrogencarbonate + 2 NH4(+). Its pathway is nitrogen metabolism; urea degradation; CO(2) and NH(3) from urea (urease route): step 1/1. In Helicobacter heilmannii, this protein is Urease subunit alpha.